A 244-amino-acid chain; its full sequence is Uridylate kinase (244 aa).

Residue 19–22 coordinates ATP; sequence KVSG. Residues 27–32 form an involved in allosteric activation by GTP region; the sequence is GERGFG. Gly61 contributes to the UMP binding site. ATP-binding residues include Gly62 and Arg66. UMP-binding positions include Asp80 and 141 to 148; that span reads IGSPFFTT. Residues Thr168, Gln169, Tyr174, and Asp177 each contribute to the ATP site.

This sequence belongs to the UMP kinase family. As to quaternary structure, homohexamer.

It is found in the cytoplasm. It catalyses the reaction UMP + ATP = UDP + ADP. It participates in pyrimidine metabolism; CTP biosynthesis via de novo pathway; UDP from UMP (UMPK route): step 1/1. Its activity is regulated as follows. Allosterically activated by GTP. Inhibited by UTP. In terms of biological role, catalyzes the reversible phosphorylation of UMP to UDP. The polypeptide is Uridylate kinase (Anaplasma phagocytophilum (strain HZ)).